Reading from the N-terminus, the 128-residue chain is UPF0325 protein YaeH (128 aa).

The protein belongs to the UPF0325 family.

This is UPF0325 protein YaeH from Shigella boydii serotype 18 (strain CDC 3083-94 / BS512).